Reading from the N-terminus, the 181-residue chain is 6,7-dimethyl-8-ribityllumazine synthase (181 aa).

5-amino-6-(D-ribitylamino)uracil contacts are provided by residues Phe-23, 61–63 (SFE), and 85–87 (AVI). 90–91 (QT) is a binding site for (2S)-2-hydroxy-3-oxobutyl phosphate. The Proton donor role is filled by His-93. Residue Phe-118 participates in 5-amino-6-(D-ribitylamino)uracil binding. Arg-132 is a (2S)-2-hydroxy-3-oxobutyl phosphate binding site.

Belongs to the DMRL synthase family.

It carries out the reaction (2S)-2-hydroxy-3-oxobutyl phosphate + 5-amino-6-(D-ribitylamino)uracil = 6,7-dimethyl-8-(1-D-ribityl)lumazine + phosphate + 2 H2O + H(+). The protein operates within cofactor biosynthesis; riboflavin biosynthesis; riboflavin from 2-hydroxy-3-oxobutyl phosphate and 5-amino-6-(D-ribitylamino)uracil: step 1/2. Its function is as follows. Catalyzes the formation of 6,7-dimethyl-8-ribityllumazine by condensation of 5-amino-6-(D-ribitylamino)uracil with 3,4-dihydroxy-2-butanone 4-phosphate. This is the penultimate step in the biosynthesis of riboflavin. The sequence is that of 6,7-dimethyl-8-ribityllumazine synthase from Synechococcus elongatus (strain ATCC 33912 / PCC 7942 / FACHB-805) (Anacystis nidulans R2).